A 306-amino-acid chain; its full sequence is tRNA pseudouridine synthase B (306 aa).

Asp46 acts as the Nucleophile in catalysis.

The protein belongs to the pseudouridine synthase TruB family. Type 1 subfamily.

It catalyses the reaction uridine(55) in tRNA = pseudouridine(55) in tRNA. In terms of biological role, responsible for synthesis of pseudouridine from uracil-55 in the psi GC loop of transfer RNAs. This chain is tRNA pseudouridine synthase B, found in Gluconacetobacter diazotrophicus (strain ATCC 49037 / DSM 5601 / CCUG 37298 / CIP 103539 / LMG 7603 / PAl5).